A 387-amino-acid polypeptide reads, in one-letter code: Succinate--CoA ligase [ADP-forming] subunit beta (387 aa).

An ATP-grasp domain is found at 9–244 (KQLFAEYGIP…KTQEDETEVL (236 aa)). ATP contacts are provided by residues Lys46, 53–55 (GRG), Gly102, and Glu107. Mg(2+)-binding residues include Asn199 and Asp213. Substrate is bound by residues Asn264 and 321-323 (GIV).

This sequence belongs to the succinate/malate CoA ligase beta subunit family. As to quaternary structure, heterotetramer of two alpha and two beta subunits. It depends on Mg(2+) as a cofactor.

The catalysed reaction is succinate + ATP + CoA = succinyl-CoA + ADP + phosphate. The enzyme catalyses GTP + succinate + CoA = succinyl-CoA + GDP + phosphate. It participates in carbohydrate metabolism; tricarboxylic acid cycle; succinate from succinyl-CoA (ligase route): step 1/1. In terms of biological role, succinyl-CoA synthetase functions in the citric acid cycle (TCA), coupling the hydrolysis of succinyl-CoA to the synthesis of either ATP or GTP and thus represents the only step of substrate-level phosphorylation in the TCA. The beta subunit provides nucleotide specificity of the enzyme and binds the substrate succinate, while the binding sites for coenzyme A and phosphate are found in the alpha subunit. The sequence is that of Succinate--CoA ligase [ADP-forming] subunit beta from Xylella fastidiosa (strain M23).